The following is a 204-amino-acid chain: Serotype 3 fimbrial subunit (204 aa).

Residues 1 to 25 (MSKFSYPALRAALILAASPVLPALA) form the signal peptide. The cysteines at positions 41 and 84 are disulfide-linked.

The protein belongs to the fimbrial protein family.

It localises to the fimbrium. Its function is as follows. Bordetella pertussis is the causative agent of whooping cough. An essential step in the disease process is the attachment of the bacteria to the ciliated epithelium of the respiratory tract, enabling the organism to resist normal host-clearance mechanisms. It is unclear which bacterial cell surface component are responsible for adherence but the fimbriae of B.pertussis are prime candidates for being involved in this process. This is Serotype 3 fimbrial subunit (fim3) from Bordetella pertussis (strain Tohama I / ATCC BAA-589 / NCTC 13251).